Here is a 475-residue protein sequence, read N- to C-terminus: Dihydrolipoyl dehydrogenase (475 aa).

Residues 36-45, K54, and G117 contribute to the FAD site; that span reads ERYNTLGGVC. A disulfide bridge connects residues C45 and C50. NAD(+) contacts are provided by residues 182–186, E205, V238, and 270–273; these read GGGII and AIGR. 2 residues coordinate FAD: D313 and A321. H445 (proton acceptor) is an active-site residue.

This sequence belongs to the class-I pyridine nucleotide-disulfide oxidoreductase family. The cofactor is FAD.

It localises to the cytoplasm. The catalysed reaction is N(6)-[(R)-dihydrolipoyl]-L-lysyl-[protein] + NAD(+) = N(6)-[(R)-lipoyl]-L-lysyl-[protein] + NADH + H(+). Functionally, the branched-chain alpha-keto dehydrogenase complex catalyzes the overall conversion of alpha-keto acids to acyl-CoA and CO(2). It contains multiple copies of 3 enzymatic components: branched-chain alpha-keto acid decarboxylase (E1), lipoamide acyltransferase (E2) and lipoamide dehydrogenase (E3). This chain is Dihydrolipoyl dehydrogenase (lpd), found in Vibrio cholerae serotype O1 (strain ATCC 39315 / El Tor Inaba N16961).